The sequence spans 313 residues: Porphobilinogen deaminase (313 aa).

Cysteine 242 is subject to S-(dipyrrolylmethanemethyl)cysteine.

This sequence belongs to the HMBS family. As to quaternary structure, monomer. Dipyrromethane is required as a cofactor.

The enzyme catalyses 4 porphobilinogen + H2O = hydroxymethylbilane + 4 NH4(+). It participates in porphyrin-containing compound metabolism; protoporphyrin-IX biosynthesis; coproporphyrinogen-III from 5-aminolevulinate: step 2/4. In terms of biological role, tetrapolymerization of the monopyrrole PBG into the hydroxymethylbilane pre-uroporphyrinogen in several discrete steps. In Proteus mirabilis, this protein is Porphobilinogen deaminase (hemC).